Consider the following 255-residue polypeptide: Hydroxyacylglutathione hydrolase (255 aa).

Positions 55, 57, 59, 60, 113, 132, and 170 each coordinate Zn(2+).

The protein belongs to the metallo-beta-lactamase superfamily. Glyoxalase II family. In terms of assembly, monomer. It depends on Zn(2+) as a cofactor.

It carries out the reaction an S-(2-hydroxyacyl)glutathione + H2O = a 2-hydroxy carboxylate + glutathione + H(+). It participates in secondary metabolite metabolism; methylglyoxal degradation; (R)-lactate from methylglyoxal: step 2/2. In terms of biological role, thiolesterase that catalyzes the hydrolysis of S-D-lactoyl-glutathione to form glutathione and D-lactic acid. The sequence is that of Hydroxyacylglutathione hydrolase from Methylobacterium sp. (strain 4-46).